Consider the following 141-residue polypeptide: Large ribosomal subunit protein uL11 (141 aa).

The protein belongs to the universal ribosomal protein uL11 family. As to quaternary structure, part of the ribosomal stalk of the 50S ribosomal subunit. Interacts with L10 and the large rRNA to form the base of the stalk. L10 forms an elongated spine to which L12 dimers bind in a sequential fashion forming a multimeric L10(L12)X complex. Post-translationally, one or more lysine residues are methylated.

In terms of biological role, forms part of the ribosomal stalk which helps the ribosome interact with GTP-bound translation factors. The polypeptide is Large ribosomal subunit protein uL11 (Chlorobium phaeobacteroides (strain DSM 266 / SMG 266 / 2430)).